Here is a 476-residue protein sequence, read N- to C-terminus: Aspartyl/glutamyl-tRNA(Asn/Gln) amidotransferase subunit B (476 aa).

The protein belongs to the GatB/GatE family. GatB subfamily. In terms of assembly, heterotrimer of A, B and C subunits.

The catalysed reaction is L-glutamyl-tRNA(Gln) + L-glutamine + ATP + H2O = L-glutaminyl-tRNA(Gln) + L-glutamate + ADP + phosphate + H(+). It catalyses the reaction L-aspartyl-tRNA(Asn) + L-glutamine + ATP + H2O = L-asparaginyl-tRNA(Asn) + L-glutamate + ADP + phosphate + 2 H(+). Allows the formation of correctly charged Asn-tRNA(Asn) or Gln-tRNA(Gln) through the transamidation of misacylated Asp-tRNA(Asn) or Glu-tRNA(Gln) in organisms which lack either or both of asparaginyl-tRNA or glutaminyl-tRNA synthetases. The reaction takes place in the presence of glutamine and ATP through an activated phospho-Asp-tRNA(Asn) or phospho-Glu-tRNA(Gln). This is Aspartyl/glutamyl-tRNA(Asn/Gln) amidotransferase subunit B from Vesicomyosocius okutanii subsp. Calyptogena okutanii (strain HA).